Here is a 450-residue protein sequence, read N- to C-terminus: Putative cysteine--tRNA ligase 2 (450 aa).

The 'HIGH' region motif lies at 29–39; it reads ITPYKSTHLGH. Positions 270–274 match the 'KMSKS' region motif; the sequence is KMSKS. Lys-273 is an ATP binding site. Positions 372-392 are disordered; it reads PIHPKHSPQMRDYSEHGSAGQ.

The protein belongs to the class-I aminoacyl-tRNA synthetase family. In terms of assembly, monomer.

It is found in the cytoplasm. The enzyme catalyses tRNA(Cys) + L-cysteine + ATP = L-cysteinyl-tRNA(Cys) + AMP + diphosphate. This chain is Putative cysteine--tRNA ligase 2 (cysS2), found in Tropheryma whipplei (strain TW08/27) (Whipple's bacillus).